Here is an 85-residue protein sequence, read N- to C-terminus: Small muscular protein (85 aa).

A disordered region spans residues 19-63 (PMGAFRPGAGQPPRRKESTPGTAEGAPATPEEKKPVPGMKKFPGP). S36 carries the phosphoserine modification. Position 47 is a phosphothreonine (T47).

This sequence belongs to the SMPX family.

Plays a role in the regulatory network through which muscle cells coordinate their structural and functional states during growth, adaptation, and repair. The sequence is that of Small muscular protein (Smpx) from Rattus norvegicus (Rat).